Reading from the N-terminus, the 393-residue chain is Formate-dependent phosphoribosylglycinamide formyltransferase (393 aa).

N(1)-(5-phospho-beta-D-ribosyl)glycinamide contacts are provided by residues 15-16 (EL) and glutamate 75. ATP-binding positions include arginine 107, lysine 148, 153 to 158 (SSGKGQ), 188 to 191 (EEYI), and glutamate 196. The region spanning 112-302 (NLAAEKLAIK…EFELHLRAIL (191 aa)) is the ATP-grasp domain. The Mg(2+) site is built by glutamate 261 and glutamate 273. N(1)-(5-phospho-beta-D-ribosyl)glycinamide-binding positions include aspartate 280, lysine 350, and 357–358 (RR).

This sequence belongs to the PurK/PurT family. As to quaternary structure, homodimer.

The catalysed reaction is N(1)-(5-phospho-beta-D-ribosyl)glycinamide + formate + ATP = N(2)-formyl-N(1)-(5-phospho-beta-D-ribosyl)glycinamide + ADP + phosphate + H(+). It functions in the pathway purine metabolism; IMP biosynthesis via de novo pathway; N(2)-formyl-N(1)-(5-phospho-D-ribosyl)glycinamide from N(1)-(5-phospho-D-ribosyl)glycinamide (formate route): step 1/1. Its function is as follows. Involved in the de novo purine biosynthesis. Catalyzes the transfer of formate to 5-phospho-ribosyl-glycinamide (GAR), producing 5-phospho-ribosyl-N-formylglycinamide (FGAR). Formate is provided by PurU via hydrolysis of 10-formyl-tetrahydrofolate. This chain is Formate-dependent phosphoribosylglycinamide formyltransferase, found in Prochlorococcus marinus (strain SARG / CCMP1375 / SS120).